Consider the following 218-residue polypeptide: 2-C-methyl-D-erythritol 4-phosphate cytidylyltransferase (218 aa).

The protein belongs to the IspD/TarI cytidylyltransferase family. IspD subfamily.

The catalysed reaction is 2-C-methyl-D-erythritol 4-phosphate + CTP + H(+) = 4-CDP-2-C-methyl-D-erythritol + diphosphate. It functions in the pathway isoprenoid biosynthesis; isopentenyl diphosphate biosynthesis via DXP pathway; isopentenyl diphosphate from 1-deoxy-D-xylulose 5-phosphate: step 2/6. In terms of biological role, catalyzes the formation of 4-diphosphocytidyl-2-C-methyl-D-erythritol from CTP and 2-C-methyl-D-erythritol 4-phosphate (MEP). The protein is 2-C-methyl-D-erythritol 4-phosphate cytidylyltransferase of Chlamydia muridarum (strain MoPn / Nigg).